A 142-amino-acid chain; its full sequence is Large ribosomal subunit protein uL13 (142 aa).

This sequence belongs to the universal ribosomal protein uL13 family. In terms of assembly, part of the 50S ribosomal subunit.

In terms of biological role, this protein is one of the early assembly proteins of the 50S ribosomal subunit, although it is not seen to bind rRNA by itself. It is important during the early stages of 50S assembly. This Haemophilus influenzae (strain 86-028NP) protein is Large ribosomal subunit protein uL13.